We begin with the raw amino-acid sequence, 379 residues long: Succinyl-diaminopimelate desuccinylase (379 aa).

Histidine 70 lines the Zn(2+) pocket. Aspartate 72 is a catalytic residue. Residue aspartate 103 participates in Zn(2+) binding. Glutamate 137 functions as the Proton acceptor in the catalytic mechanism. Residues glutamate 138, glutamate 166, and histidine 352 each contribute to the Zn(2+) site.

Belongs to the peptidase M20A family. DapE subfamily. Homodimer. Zn(2+) serves as cofactor. The cofactor is Co(2+).

It carries out the reaction N-succinyl-(2S,6S)-2,6-diaminopimelate + H2O = (2S,6S)-2,6-diaminopimelate + succinate. It participates in amino-acid biosynthesis; L-lysine biosynthesis via DAP pathway; LL-2,6-diaminopimelate from (S)-tetrahydrodipicolinate (succinylase route): step 3/3. Functionally, catalyzes the hydrolysis of N-succinyl-L,L-diaminopimelic acid (SDAP), forming succinate and LL-2,6-diaminopimelate (DAP), an intermediate involved in the bacterial biosynthesis of lysine and meso-diaminopimelic acid, an essential component of bacterial cell walls. In Paraburkholderia xenovorans (strain LB400), this protein is Succinyl-diaminopimelate desuccinylase.